A 124-amino-acid chain; its full sequence is Small ribosomal subunit protein uS12 (124 aa).

Aspartate 89 carries the 3-methylthioaspartic acid modification.

The protein belongs to the universal ribosomal protein uS12 family. In terms of assembly, part of the 30S ribosomal subunit. Contacts proteins S8 and S17. May interact with IF1 in the 30S initiation complex.

In terms of biological role, with S4 and S5 plays an important role in translational accuracy. Interacts with and stabilizes bases of the 16S rRNA that are involved in tRNA selection in the A site and with the mRNA backbone. Located at the interface of the 30S and 50S subunits, it traverses the body of the 30S subunit contacting proteins on the other side and probably holding the rRNA structure together. The combined cluster of proteins S8, S12 and S17 appears to hold together the shoulder and platform of the 30S subunit. The protein is Small ribosomal subunit protein uS12 of Baumannia cicadellinicola subsp. Homalodisca coagulata.